The sequence spans 280 residues: MQGQVLKKVLKKYVHIGMCTLFLHAILLFPCVAQAVLCQIFLSALIRNTSRMPHTMCSFPSQVTAIFDICACPCAVRSFYLNGNSLIFTGGGHPFSVYASRFSSLPFLETSSGTVAGAAYSVASFLGFTRITSVGTDFSYTNGKPYARGTYLSKQFEQKILRISPLETQFCNLMFRTPTRQDNTQGGITYSNEILDQYKRNFDQITPGARPWHAADFRAFPYKQFINFFHAQLRSKHAAALLAMLPFITWYKTKRTPQAPIFRILELVLEDVLRYTRYNE.

The N-terminal stretch at 1-35 (MQGQVLKKVLKKYVHIGMCTLFLHAILLFPCVAQA) is a signal peptide.

This is an uncharacterized protein from Treponema pallidum (strain Nichols).